The following is a 163-amino-acid chain: Crossover junction endodeoxyribonuclease RuvC (163 aa).

Catalysis depends on residues Asp9, Glu76, and Asp148. Mg(2+) is bound by residues Asp9, Glu76, and Asp148.

This sequence belongs to the RuvC family. As to quaternary structure, homodimer which binds Holliday junction (HJ) DNA. The HJ becomes 2-fold symmetrical on binding to RuvC with unstacked arms; it has a different conformation from HJ DNA in complex with RuvA. In the full resolvosome a probable DNA-RuvA(4)-RuvB(12)-RuvC(2) complex forms which resolves the HJ. Mg(2+) is required as a cofactor.

Its subcellular location is the cytoplasm. It catalyses the reaction Endonucleolytic cleavage at a junction such as a reciprocal single-stranded crossover between two homologous DNA duplexes (Holliday junction).. Its function is as follows. The RuvA-RuvB-RuvC complex processes Holliday junction (HJ) DNA during genetic recombination and DNA repair. Endonuclease that resolves HJ intermediates. Cleaves cruciform DNA by making single-stranded nicks across the HJ at symmetrical positions within the homologous arms, yielding a 5'-phosphate and a 3'-hydroxyl group; requires a central core of homology in the junction. The consensus cleavage sequence is 5'-(A/T)TT(C/G)-3'. Cleavage occurs on the 3'-side of the TT dinucleotide at the point of strand exchange. HJ branch migration catalyzed by RuvA-RuvB allows RuvC to scan DNA until it finds its consensus sequence, where it cleaves and resolves the cruciform DNA. This is Crossover junction endodeoxyribonuclease RuvC from Nostoc punctiforme (strain ATCC 29133 / PCC 73102).